A 370-amino-acid polypeptide reads, in one-letter code: Queuine tRNA-ribosyltransferase (370 aa).

D89 acts as the Proton acceptor in catalysis. Substrate contacts are provided by residues 89-93 (DSGGF), D143, Q187, and G214. Residues 245-251 (GVGKPED) are RNA binding. Catalysis depends on D264, which acts as the Nucleophile. The RNA binding; important for wobble base 34 recognition stretch occupies residues 269–273 (TRNAR). The Zn(2+) site is built by C302, C304, C307, and H333.

It belongs to the queuine tRNA-ribosyltransferase family. As to quaternary structure, homodimer. Within each dimer, one monomer is responsible for RNA recognition and catalysis, while the other monomer binds to the replacement base PreQ1. Requires Zn(2+) as cofactor.

It catalyses the reaction 7-aminomethyl-7-carbaguanine + guanosine(34) in tRNA = 7-aminomethyl-7-carbaguanosine(34) in tRNA + guanine. The protein operates within tRNA modification; tRNA-queuosine biosynthesis. Functionally, catalyzes the base-exchange of a guanine (G) residue with the queuine precursor 7-aminomethyl-7-deazaguanine (PreQ1) at position 34 (anticodon wobble position) in tRNAs with GU(N) anticodons (tRNA-Asp, -Asn, -His and -Tyr). Catalysis occurs through a double-displacement mechanism. The nucleophile active site attacks the C1' of nucleotide 34 to detach the guanine base from the RNA, forming a covalent enzyme-RNA intermediate. The proton acceptor active site deprotonates the incoming PreQ1, allowing a nucleophilic attack on the C1' of the ribose to form the product. After dissociation, two additional enzymatic reactions on the tRNA convert PreQ1 to queuine (Q), resulting in the hypermodified nucleoside queuosine (7-(((4,5-cis-dihydroxy-2-cyclopenten-1-yl)amino)methyl)-7-deazaguanosine). The protein is Queuine tRNA-ribosyltransferase of Baumannia cicadellinicola subsp. Homalodisca coagulata.